Reading from the N-terminus, the 353-residue chain is Replication factor C subunit 2 (353 aa).

N-acetylmethionine is present on Met-1. Residues Val-28, Arg-32, 65–73 (GPPGTGKTS), Asn-171, and Arg-229 each bind ATP.

Belongs to the activator 1 small subunits family. As to quaternary structure, replication factor C (RFC) is a heteropentamer of subunits RFC1, RFC2, RFC3, RFC4 and RFC5 and forms a complex with POL30/PCNA in the presence of ATP. Component of the RAD24-RFC complex which consists of RAD14, RFC2, RFC3, RFC4 and RFC5 and associates with the checkpoint clamp DDC1:MEC3:RAD17 complex. Component of the ELG1-RFC complex which consists of ELG1, RFC2, RFC3, RFC4 and RFC5. Component of the CTF18-RFC complex, which consists of CTF18, CTF8, DCC1, RFC2, RFC3, RFC4 and RFC5. RFC2 interacts with ECO1.

It is found in the nucleus. Functionally, component of ATP-dependent clamp loader (RFC and RFC-like) complexes for DNA clamps, such as the POL30/PCNA homotrimer and the checkpoint clamp DDC1:MEC3:RAD17 complex. During a clamp loading circle, the RFC:clamp complex binds to DNA and the recognition of the double-stranded/single-stranded junction stimulates ATP hydrolysis by RFC. The complex presumably provides bipartite ATP sites in which one subunit supplies a catalytic site for hydrolysis of ATP bound to the neighboring subunit. Dissociation of RFC from the clamp leaves the clamp encircling DNA. Component of the replication factor C (RFC or activator 1) complex which loads POL30/PCNA and acts during elongation of primed DNA templates by DNA polymerase delta and epsilon. RFC has an essential but redundant activity in sister chromatid cohesion establishment. Component of the RFC-like complex CTF18-RFC which is required for efficient establishment of chromosome cohesion during S-phase and may load or unload POL30/PCNA. Component of the RFC-like RAD24-RFC complex which loads the checkpoint clamp DDC1:MEC3:RAD17 complex and is involved in DNA repair pathways. Component of the RFC-like ELG1-RFC complex which appears to have a role in DNA replication, replication fork re-start, recombination and repair. RFC2 binds ATP and single-stranded DNA. This chain is Replication factor C subunit 2 (RFC2), found in Saccharomyces cerevisiae (strain ATCC 204508 / S288c) (Baker's yeast).